The chain runs to 270 residues: DNA repair protein RecO (270 aa).

It belongs to the RecO family.

Involved in DNA repair and RecF pathway recombination. In Synechococcus sp. (strain WH7803), this protein is DNA repair protein RecO.